The following is a 438-amino-acid chain: Putative formin-like protein 21a (438 aa).

The interval 1 to 74 (MSPVEISGAD…RVLPRPPPPP (74 aa)) is disordered. A compositionally biased stretch (pro residues) spans 22 to 61 (PLPPPPPPPPPPMRRRAPLPPPPPPPMRRRAPLPPPPPPA). The region spanning 124 to 438 (FPCPSKKKSS…SYGYFDQPWI (315 aa)) is the FH2 domain.

It belongs to the formin-like family. Class-II subfamily.

In Arabidopsis thaliana (Mouse-ear cress), this protein is Putative formin-like protein 21a (FH21A).